The sequence spans 253 residues: MEYVYLILFSIVSLILGSFSNVVIYRLPRKILLKNHFFYDIDSNRSMCPKCGNKISWYDNVPLLSYLLLHGKCRHCDEKISLSYFIVELSFFIIAFPIYWLSTDWVDSFVLLGLYFILFNLFVIDFKSMLLPNLLTYPIFMLAFIYVQQNPALTVESSIIGGFAAFIISYVSNFIVRLFKRIDVMGGGDIKLYTAIGTLIGVEFVPYLFLLSSIIAFIHWFFARVSCRYCLYIPLGPSIIISFVIVFFSIRLM.

The helical transmembrane segment at 4–24 (VYLILFSIVSLILGSFSNVVI) threads the bilayer. Residues C48, C51, C73, and C76 each coordinate Zn(2+). 6 helical membrane-spanning segments follow: residues 80–100 (ISLSYFIVELSFFIIAFPIYW), 106–126 (VDSFVLLGLYFILFNLFVIDF), 129–149 (MLLPNLLTYPIFMLAFIYVQQ), 159–179 (IIGGFAAFIISYVSNFIVRLF), 198–218 (TLIGVEFVPYLFLLSSIIAFI), and 230–250 (CLYIPLGPSIIISFVIVFFSI).

The protein belongs to the peptidase A24 family. The cofactor is Zn(2+).

Its subcellular location is the cell inner membrane. It catalyses the reaction Typically cleaves a -Gly-|-Phe- bond to release an N-terminal, basic peptide of 5-8 residues from type IV prepilin, and then N-methylates the new N-terminal amino group, the methyl donor being S-adenosyl-L-methionine.. Its function is as follows. Plays an essential role in type IV pili and type II pseudopili formation by proteolytically removing the leader sequence from substrate proteins and subsequently monomethylating the alpha-amino group of the newly exposed N-terminal phenylalanine. The protein is Prepilin leader peptidase/N-methyltransferase (tcpJ) of Vibrio cholerae serotype O1 (strain ATCC 39315 / El Tor Inaba N16961).